A 145-amino-acid polypeptide reads, in one-letter code: Polytheonamide B (145 aa).

Residues 1-96 constitute a propeptide that is removed on maturation; the sequence is MADSDNTPTS…DDDLDQAAGG (96 aa). The residue at position 97 (Thr-97) is a 2-oxo-5,5-dimethylhexanoate. At Ile-99 the chain carries 3-methylisoleucine. Position 101 is a 3-methylvaline (Val-101). Val-102 is subject to 3-methyl-D-valine. A 3-methylvaline modification is found at Val-103. At Ala-104 the chain carries D-alanine (Ala). 3-methylvaline is present on Val-105. 3-methyl-D-valine is present on residues Val-106 and Val-110. N4-methyl-D-asparagine is present on Asn-112. Thr-113 is modified (3-hydroxyvaline (Thr)). Residue Val-117 is modified to 3-methylvaline. N4-methyl-D-asparagine is present on Asn-118. At Gln-119 the chain carries (3S)-3-methylglutamine. Position 120 is a 3-hydroxy-D-valine (Val-120). Asn-124 is modified (N4-methyl-D-asparagine). Residue Asn-126 is modified to (3R)-N4-methyl-3-hydroxy-D-asparagine. Residue Val-127 is modified to 3-methylvaline. Val-128 carries the 3-hydroxy-D-valine modification. N4-methyl-D-asparagine is present on residues Asn-130 and Asn-132. Asn-134 bears the (3R)-N4-methyl-3-hydroxy-D-asparagine mark. Asn-136 is modified (N4-methyl-D-asparagine). Ser-138 bears the D-serine (Ser) mark. The residue at position 140 (Asn-140) is a D-asparagine. Position 141 is a 3,3-dimethylmethionine (Met-141). Asn-142 carries the post-translational modification D-asparagine. Thr-144 carries the post-translational modification D-threonine.

Post-translationally, epimerization of most, and perhaps all, L- to D-amino acids is catalyzed by PoyD, when PoyA and PoyD are coexpressed in E.coli. N-methylations are catalyzed by PoyE, when PoyA and PoyE are coexpressed in E.coli. In terms of processing, to obtain 2-oxo-5,5-dimethylhexanoate, Thr-97 is firstly dehydrated by PoyF. The second step possibly corresponds to methylation by PoyB/C, and the third step may be a cleavage by PoyH/J.

Antimicrobial peptide active against Gram-positive bacteria (MIC=4-&gt;125 ug/ml). May act by forming transmembrane ion channels, since the peptide rapidly depolarizes the bacterial cytoplasmic membrane, simultaneously decreasing the membrane potential and intracellular potassium contents. This is Polytheonamide B from Bacterium symbiont subsp. Theonella swinhoei (strain pTSMAC1).